The primary structure comprises 471 residues: Lincomycin resistance protein LmrB (471 aa).

The next 13 membrane-spanning stretches (helical) occupy residues proline 15–leucine 34, leucine 55–phenylalanine 77, leucine 82–alanine 104, valine 111–isoleucine 131, methionine 141–leucine 163, tryptophan 170–methionine 187, aspartate 202–glycine 224, alanine 231–threonine 253, methionine 268–leucine 290, serine 297–methionine 319, alanine 329–threonine 351, serine 358–alanine 380, and glycine 445–isoleucine 467.

It belongs to the major facilitator superfamily. EmrB family.

It is found in the cell membrane. Its function is as follows. Proton-dependent transporter. May mediate the efflux of lincomycin. This chain is Lincomycin resistance protein LmrB (lmrB), found in Listeria innocua serovar 6a (strain ATCC BAA-680 / CLIP 11262).